The chain runs to 174 residues: NADH-ubiquinone oxidoreductase chain 6 (174 aa).

6 helical membrane-spanning segments follow: residues 1 to 21 (MTYA…GFSS), 24 to 44 (SPIY…AVIL), 47 to 67 (GGGY…MVVF), 86 to 106 (AEVL…VLWV), 111 to 131 (GVVV…EGEG), and 151 to 171 (WLVV…IEIA).

This sequence belongs to the complex I subunit 6 family. In terms of assembly, core subunit of respiratory chain NADH dehydrogenase (Complex I) which is composed of 45 different subunits.

It localises to the mitochondrion inner membrane. The enzyme catalyses a ubiquinone + NADH + 5 H(+)(in) = a ubiquinol + NAD(+) + 4 H(+)(out). Core subunit of the mitochondrial membrane respiratory chain NADH dehydrogenase (Complex I) which catalyzes electron transfer from NADH through the respiratory chain, using ubiquinone as an electron acceptor. Essential for the catalytic activity and assembly of complex I. The chain is NADH-ubiquinone oxidoreductase chain 6 (MT-ND6) from Pongo pygmaeus (Bornean orangutan).